The sequence spans 529 residues: Serine hydroxymethyltransferase 3, chloroplastic (529 aa).

The transit peptide at 1-60 directs the protein to the chloroplast; it reads MQACCGGNSMASLQQPGRVQGSVFPPIMPPVTKFSQQLKFNISKPFRSSFLKRNLVSEMR. Residue Lys314 is modified to N6-(pyridoxal phosphate)lysine.

It belongs to the SHMT family. As to quaternary structure, homotetramer. Pyridoxal 5'-phosphate is required as a cofactor.

It localises to the plastid. It is found in the chloroplast. It carries out the reaction (6R)-5,10-methylene-5,6,7,8-tetrahydrofolate + glycine + H2O = (6S)-5,6,7,8-tetrahydrofolate + L-serine. Its pathway is one-carbon metabolism; tetrahydrofolate interconversion. Inhibited by 5-CH3-H4PteGlu1/5 and 5-HCO-H4PteGlu1/5 in vitro. Its function is as follows. Catalyzes the interconversion of serine and glycine and directs the hydroxymethyl moiety of serine into the metabolic network of H4PteGlu(n)-bound one-carbon units. In Arabidopsis thaliana (Mouse-ear cress), this protein is Serine hydroxymethyltransferase 3, chloroplastic.